We begin with the raw amino-acid sequence, 403 residues long: Metacaspase-7 (403 aa).

Catalysis depends on residues H86 and C139. C139 bears the S-nitrosocysteine mark.

Belongs to the peptidase C14B family. Post-translationally, proteolytically processed; by an autocatalytic mechanism. Expressed in roots, flowers and siliques.

The sequence is that of Metacaspase-7 (AMC7) from Arabidopsis thaliana (Mouse-ear cress).